A 170-amino-acid polypeptide reads, in one-letter code: NADH-quinone oxidoreductase subunit E (170 aa).

[2Fe-2S] cluster is bound by residues cysteine 93, cysteine 98, cysteine 134, and cysteine 138.

This sequence belongs to the complex I 24 kDa subunit family. [2Fe-2S] cluster serves as cofactor.

The catalysed reaction is a quinone + NADH + 5 H(+)(in) = a quinol + NAD(+) + 4 H(+)(out). In terms of biological role, NDH-1 shuttles electrons from NADH, via FMN and iron-sulfur (Fe-S) centers, to quinones in the respiratory chain. Couples the redox reaction to proton translocation (for every two electrons transferred, four hydrogen ions are translocated across the cytoplasmic membrane), and thus conserves the redox energy in a proton gradient. The chain is NADH-quinone oxidoreductase subunit E (nuoE) from Rickettsia typhi (strain ATCC VR-144 / Wilmington).